A 189-amino-acid chain; its full sequence is Inosine triphosphate pyrophosphatase (189 aa).

Position 8-13 (8-13 (TGNANK)) interacts with ITP. Glu39 contacts Mg(2+). Residues Lys51, 67–68 (DT), Lys84, 143–146 (FGWD), Lys167, and 172–173 (HR) each bind ITP.

The protein belongs to the HAM1 NTPase family. Homodimer. Requires Mg(2+) as cofactor. Mn(2+) is required as a cofactor.

Its subcellular location is the cytoplasm. The protein localises to the nucleus. It carries out the reaction ITP + H2O = IMP + diphosphate + H(+). The enzyme catalyses dITP + H2O = dIMP + diphosphate + H(+). The catalysed reaction is XTP + H2O = XMP + diphosphate + H(+). Its function is as follows. Pyrophosphatase that hydrolyzes non-canonical purine nucleotides such as inosine triphosphate (ITP), deoxyinosine triphosphate (dITP) or xanthosine 5'-triphosphate (XTP) to their respective monophosphate derivatives. The enzyme does not distinguish between the deoxy- and ribose forms. Probably excludes non-canonical purines from RNA and DNA precursor pools, thus preventing their incorporation into RNA and DNA and avoiding chromosomal lesions. In Cryptococcus neoformans var. neoformans serotype D (strain JEC21 / ATCC MYA-565) (Filobasidiella neoformans), this protein is Inosine triphosphate pyrophosphatase.